We begin with the raw amino-acid sequence, 407 residues long: MYTISKARRLGKCFLIIDNMFVVIGFYVVFPLISIYFVEQLGWGAFLVGFALGLRQFIQQGLGIFSGAFADKLGAKPMIVSGLFIRTLGFIIMSVANTPLLLCLSCMLSALGGTLFDPPRTALVIKLVRPWELGRFYSVLMLEDSMCAIIGIVLGTWLLQYNFKLVCFTGAILFFIAGVFNAWRLPAYKISSSHASLLEGIKKVLNNQRFVIYVFTLTGYYILSAQVMLMLPIRIHEVSGQLSYIKWMYIIEAILSLLLIMPITWWSEKYFKLETRLMVGLITMIISLFPIGLVKNLHTLLILISLFYIGSIIAEPARETLGALLTDYKARSSYIGFSKLSLALGGTVGYSGSGWLYDIGKEQNFTQLPWIILSIIGLITLLGLYCQFKYYSFQSLLNNSHNKKRKL.

10 helical membrane passes run 13 to 33, 88 to 108, 139 to 159, 163 to 183, 210 to 230, 247 to 267, 277 to 297, 298 to 318, 340 to 360, and 368 to 388; these read CFLIIDNMFVVIGFYVVFPLI, LGFIIMSVANTPLLLCLSCML, VLMLEDSMCAIIGIVLGTWLL, FKLVCFTGAILFFIAGVFNAW, FVIYVFTLTGYYILSAQVMLM, WMYIIEAILSLLLIMPITWWS, LMVGLITMIISLFPIGLVKNL, HTLLILISLFYIGSIIAEPAR, LSLALGGTVGYSGSGWLYDIG, and LPWIILSIIGLITLLGLYCQF.

The protein belongs to the major facilitator superfamily. DHA1 family. MdtH (TC 2.A.1.2.21) subfamily.

It is found in the cell inner membrane. The protein is Multidrug resistance protein MdtH of Blochmanniella pennsylvanica (strain BPEN).